The primary structure comprises 427 residues: Homoserine O-acetyltransferase FUB5 (427 aa).

The span at M1–P13 shows a compositional bias: low complexity. The segment at M1–F35 is disordered. Residues N77–L400 form the AB hydrolase-1 domain. S175 serves as the catalytic Nucleophile. The tract at residues R260–V297 is disordered. Residues S276–H287 are compositionally biased toward polar residues. Active-site residues include D367 and H396.

The protein belongs to the AB hydrolase superfamily. MetX family.

The catalysed reaction is L-homoserine + acetyl-CoA = O-acetyl-L-homoserine + CoA. The protein operates within mycotoxin biosynthesis. In terms of biological role, homoserine O-acetyltransferase; part of the gene cluster that mediates the biosynthesis of fusaric acid, a mycotoxin with low to moderate toxicity to animals and humans, but with high phytotoxic properties. L-aspartate is suggested as fusaric acid amino acid precursor that is activated and further processed to O-acetyl-L-homoserine by cluster enzymes aspartate kinase FUB3 and homoserine O-acetyltransferase FUB5, as well as enzymes of the primary metabolism. The polyketide synthase (PKS) FUB1 generates the triketide trans-2-hexenal which is presumptively released by the hydrolase FUB4 and linked to the NRPS-bound amino acid precursor by NAD(P)-dependent dehydrogenase FUB6. FUB1, FUB4, and the non-canonical NRPS Fub8 may form an enzyme complex. Further processing of the NRPS-bound intermediate might be carried out by FUB6 and the sulfhydrylase FUB7, enabling a spontaneous electrocyclization to close the carbon backbone of fusaric acid. Dihydrofusaric acid is likely to be released via reduction by the thioester reductase (TR) domain of FUB8 whereupon the final oxidation to fusaric acid may (also) be performed by the FMN-dependent dehydrogenase FUB9. This is Homoserine O-acetyltransferase FUB5 from Gibberella fujikuroi (strain CBS 195.34 / IMI 58289 / NRRL A-6831) (Bakanae and foot rot disease fungus).